The following is a 275-amino-acid chain: 2,3,4,5-tetrahydropyridine-2,6-dicarboxylate N-succinyltransferase (275 aa).

Positions 108 and 145 each coordinate substrate.

It belongs to the transferase hexapeptide repeat family. Homotrimer.

It is found in the cytoplasm. The enzyme catalyses (S)-2,3,4,5-tetrahydrodipicolinate + succinyl-CoA + H2O = (S)-2-succinylamino-6-oxoheptanedioate + CoA. The protein operates within amino-acid biosynthesis; L-lysine biosynthesis via DAP pathway; LL-2,6-diaminopimelate from (S)-tetrahydrodipicolinate (succinylase route): step 1/3. In Ruegeria pomeroyi (strain ATCC 700808 / DSM 15171 / DSS-3) (Silicibacter pomeroyi), this protein is 2,3,4,5-tetrahydropyridine-2,6-dicarboxylate N-succinyltransferase.